The sequence spans 520 residues: DEP domain-containing protein 7 (520 aa).

Positions 45–137 constitute a DEP domain; sequence ALTQVEVKKR…SSCSLYRFIN (93 aa). Residues 148–167 are disordered; it reads KSNGRCTPQRPKHSSFQSAP.

This sequence belongs to the DEPDC7 family.

The sequence is that of DEP domain-containing protein 7 (depdc7) from Xenopus tropicalis (Western clawed frog).